Reading from the N-terminus, the 42-residue chain is MKVIGSLKSAKVRDKDCRIVRRKGRIYVINKKNPRFKARQGY.

It belongs to the bacterial ribosomal protein bL36 family.

This is Large ribosomal subunit protein bL36 from Ehrlichia canis (strain Jake).